The chain runs to 182 residues: Large ribosomal subunit protein uL6 (182 aa).

The protein belongs to the universal ribosomal protein uL6 family. As to quaternary structure, part of the 50S ribosomal subunit.

In terms of biological role, this protein binds to the 23S rRNA, and is important in its secondary structure. It is located near the subunit interface in the base of the L7/L12 stalk, and near the tRNA binding site of the peptidyltransferase center. This Methanocaldococcus jannaschii (strain ATCC 43067 / DSM 2661 / JAL-1 / JCM 10045 / NBRC 100440) (Methanococcus jannaschii) protein is Large ribosomal subunit protein uL6.